Reading from the N-terminus, the 360-residue chain is Glycerol-3-phosphate dehydrogenase [NAD(+)], cytoplasmic (360 aa).

NAD(+)-binding positions include 11-16 (GSGNWG), Phe98, Lys121, and Ala155. Residue Lys121 participates in substrate binding. Catalysis depends on Lys206, which acts as the Proton acceptor. Arg270 and Gln299 together coordinate NAD(+). Residue 270–271 (RN) participates in substrate binding.

This sequence belongs to the NAD-dependent glycerol-3-phosphate dehydrogenase family. In terms of assembly, homodimer.

It is found in the cytoplasm. The catalysed reaction is sn-glycerol 3-phosphate + NAD(+) = dihydroxyacetone phosphate + NADH + H(+). It functions in the pathway phospholipid metabolism; alpha-glycerophosphate cycle. The protein is Glycerol-3-phosphate dehydrogenase [NAD(+)], cytoplasmic (Gpdh1) of Drosophila kanekoi (Fruit fly).